A 275-amino-acid polypeptide reads, in one-letter code: Putative carbamate hydrolase RutD (275 aa).

Belongs to the AB hydrolase superfamily. Hydrolase RutD family.

The catalysed reaction is carbamate + 2 H(+) = NH4(+) + CO2. In terms of biological role, involved in pyrimidine catabolism. May facilitate the hydrolysis of carbamate, a reaction that can also occur spontaneously. The protein is Putative carbamate hydrolase RutD of Escherichia coli O6:H1 (strain CFT073 / ATCC 700928 / UPEC).